The following is a 100-amino-acid chain: Small ribosomal subunit protein uS14c (100 aa).

Belongs to the universal ribosomal protein uS14 family. Part of the 30S ribosomal subunit.

The protein localises to the plastid. It localises to the chloroplast. Functionally, binds 16S rRNA, required for the assembly of 30S particles. The chain is Small ribosomal subunit protein uS14c from Eucalyptus globulus subsp. globulus (Tasmanian blue gum).